We begin with the raw amino-acid sequence, 178 residues long: Adenine phosphoribosyltransferase (178 aa).

It belongs to the purine/pyrimidine phosphoribosyltransferase family. Homodimer.

It is found in the cytoplasm. It catalyses the reaction AMP + diphosphate = 5-phospho-alpha-D-ribose 1-diphosphate + adenine. It participates in purine metabolism; AMP biosynthesis via salvage pathway; AMP from adenine: step 1/1. Catalyzes a salvage reaction resulting in the formation of AMP, that is energically less costly than de novo synthesis. This Bacteroides fragilis (strain ATCC 25285 / DSM 2151 / CCUG 4856 / JCM 11019 / LMG 10263 / NCTC 9343 / Onslow / VPI 2553 / EN-2) protein is Adenine phosphoribosyltransferase.